The primary structure comprises 44 residues: Brevinin-1PLa (44 aa).

Positions 1-18 (NAEEERRDEPDETDVEVE) are excised as a propeptide. C38 and C44 are oxidised to a cystine.

As to expression, expressed by the skin glands.

Its subcellular location is the secreted. Its function is as follows. Antimicrobial peptide. This chain is Brevinin-1PLa, found in Lithobates palustris (Pickerel frog).